Consider the following 329-residue polypeptide: Cytosolic arginine sensor for mTORC1 subunit 1 (329 aa).

Residue Ser-14 is modified to Phosphoserine; by PKB/AKT1. 2 consecutive ACT domains span residues 72–138 and 260–321; these read AEAT…HTLA and GELW…EVLQ. L-arginine-binding positions include 111-112, Gly-274, 280-281, and 300-304; these read SV, IV, and TFNFD.

It belongs to the GATS family. Forms homodimers and heterodimers with CASTOR2. Interacts with the GATOR2 complex which is composed of MIOS, SEC13, SEH1L, WDR24 and WDR59; the interaction is negatively regulated by arginine. Interacts with TM4SF5; the interaction is positively regulated by leucine and is negatively regulated by arginine. Phosphorylation at Ser-14 by AKT1, promoting the interaction between CASTOR1 and RNF167. In terms of processing, ubiquitinated by RNF167 via 'Lys-29'-polyubiquitination, leading to its degradation, releasing the GATOR2 complex. Ubiquitination by RNF167 is promoted by phosphorylation at Ser-14 by AKT1. As to expression, widely expressed.

It is found in the cytoplasm. Its subcellular location is the cytosol. Its function is as follows. Functions as an intracellular arginine sensor within the amino acid-sensing branch of the TORC1 signaling pathway. As a homodimer or a heterodimer with CASTOR2, binds and inhibits the GATOR subcomplex GATOR2 and thereby mTORC1. Binding of arginine to CASTOR1 allosterically disrupts the interaction of CASTOR1-containing dimers with GATOR2 which can in turn activate mTORC1 and the TORC1 signaling pathway. This Homo sapiens (Human) protein is Cytosolic arginine sensor for mTORC1 subunit 1.